The primary structure comprises 133 residues: IgW chain C region, secreted form 2 (133 aa).

The region spanning 1 to 71 (VISGFYPDSV…TGSRFNDRIS (71 aa)) is the Ig-like domain. N-linked (GlcNAc...) asparagine glycosylation is found at asparagine 32 and asparagine 112. The secretory tail stretch occupies residues 76-133 (KGGTVNLPVPGGNTPCTCPPSSCSGCMPKLVYQTDLNVTLENGGQLQYNCHQQACKIK).

Expressed mainly in lymphoid tissues including spleen, epigonal organ and circulating lymphocytes.

The protein localises to the secreted. This Heterodontus francisci (Horn shark) protein is IgW chain C region, secreted form 2.